We begin with the raw amino-acid sequence, 583 residues long: Thiol:disulfide interchange protein DsbD (583 aa).

A signal peptide spans 1-18 (MRRLFLLLFMLFTTLAHA). Disulfide bonds link C118–C124 and C186–C306. The next 8 helical transmembrane spans lie at 168–188 (GLGL…PCSL), 214–234 (SYVL…ALLG), 245–265 (WVLG…FGFF), 289–309 (LIGC…CMTA), 326–346 (FGGL…LLLV), 359–379 (WMNL…IYML), 382–402 (VLNP…VAYC), and 413–433 (LLHL…MLLV). Residues 458–581 (VTAHDAFTTV…FLQRWTQTRE (124 aa)) form the Thioredoxin domain. C496 and C499 are joined by a disulfide.

This sequence belongs to the thioredoxin family. DsbD subfamily.

The protein localises to the cell inner membrane. The catalysed reaction is [protein]-dithiol + NAD(+) = [protein]-disulfide + NADH + H(+). The enzyme catalyses [protein]-dithiol + NADP(+) = [protein]-disulfide + NADPH + H(+). Required to facilitate the formation of correct disulfide bonds in some periplasmic proteins and for the assembly of the periplasmic c-type cytochromes. Acts by transferring electrons from cytoplasmic thioredoxin to the periplasm. This transfer involves a cascade of disulfide bond formation and reduction steps. This Pseudomonas fluorescens (strain ATCC BAA-477 / NRRL B-23932 / Pf-5) protein is Thiol:disulfide interchange protein DsbD.